The primary structure comprises 828 residues: Glycerol-3-phosphate acyltransferase (828 aa).

The short motif at 309–314 (CHRSHI) is the HXXXXD motif element.

It belongs to the GPAT/DAPAT family.

The protein resides in the cell inner membrane. It catalyses the reaction sn-glycerol 3-phosphate + an acyl-CoA = a 1-acyl-sn-glycero-3-phosphate + CoA. Its pathway is phospholipid metabolism; CDP-diacylglycerol biosynthesis; CDP-diacylglycerol from sn-glycerol 3-phosphate: step 1/3. The protein is Glycerol-3-phosphate acyltransferase of Pseudomonas putida (strain W619).